We begin with the raw amino-acid sequence, 168 residues long: Protein-export protein SecB (168 aa).

The protein belongs to the SecB family. As to quaternary structure, homotetramer, a dimer of dimers. One homotetramer interacts with 1 SecA dimer.

It localises to the cytoplasm. One of the proteins required for the normal export of preproteins out of the cell cytoplasm. It is a molecular chaperone that binds to a subset of precursor proteins, maintaining them in a translocation-competent state. It also specifically binds to its receptor SecA. In Saccharophagus degradans (strain 2-40 / ATCC 43961 / DSM 17024), this protein is Protein-export protein SecB.